The following is a 445-amino-acid chain: DDB1- and CUL4-associated factor 13 (445 aa).

K49 bears the N6-acetyllysine mark. WD repeat units follow at residues 64–104, 107–146, 149–191, 194–234, 236–276, 280–319, and 323–362; these read GHRD…CIRT, AHEG…YGDE, PLHT…PICS, WGFD…PLKK, ILDM…TPVM, DHVS…SREV, and KRMQ…KLGV. The segment at 353–441 is required for nucleolar location; that stretch reads KANASEKLGV…LVSEKKKHVV (89 aa).

This sequence belongs to the WD repeat DCAF13/WDSOF1 family. As to quaternary structure, part of the small subunit (SSU) processome, composed of more than 70 proteins and the RNA chaperone small nucleolar RNA (snoRNA) U3. Component of the DCX(DCAF13) E3 ubiquitin ligase complex, at least composed of CUL4 (CUL4A or CUL4B), DDB1, DCAF13 and RBX1. Interacts (via WD40 domain) with DDB1. Interacts with ESR1 and LATS1. Expressed in the endometrium during decidualization. Expression is down-regulated in preeclampsia decidual tissues.

It localises to the nucleus. It is found in the nucleolus. It participates in protein modification; protein ubiquitination. Functionally, part of the small subunit (SSU) processome, first precursor of the small eukaryotic ribosomal subunit. During the assembly of the SSU processome in the nucleolus, many ribosome biogenesis factors, an RNA chaperone and ribosomal proteins associate with the nascent pre-rRNA and work in concert to generate RNA folding, modifications, rearrangements and cleavage as well as targeted degradation of pre-ribosomal RNA by the RNA exosome. Participates in the 18S rRNA processing in growing oocytes, being essential for oocyte nonsurrounded nucleolus (NSN) to surrounded nucleolus (SN) transition. Substrate-recognition component of a DCX (DDB1-CUL4-X-box) E3 ubiquitin-protein ligase complex that plays a key role in embryo preimplantation and is required for normal meiotic cycle progression in oocytes. Acts as a maternal factor that regulates oocyte and zygotic chromatin tightness during maternal to zygotic transition. Also involved in the transformation of the endometrium into the decidua, known as decidualization, providing a solid foundation for implantation of blastocysts. Recognizes the histone methyltransferases SUV39H1 and SUV39H2 and directs them to polyubiquitination and proteasomal degradation, which facilitates the H3K9me3 removal and early zygotic gene expression, essential steps for progressive genome reprogramming and the establishment of pluripotency during preimplantation embryonic development. Supports the spindle assembly and chromosome condensation during oocyte meiotic division by targeting the polyubiquitination and degradation of PTEN, a lipid phosphatase that inhibits PI3K pathway as well as oocyte growth and maturation. Targets PMP22 for polyubiquitination and proteasomal degradation. The sequence is that of DDB1- and CUL4-associated factor 13 from Homo sapiens (Human).